The primary structure comprises 322 residues: Zinc finger C2HC domain-containing protein CBG14627 (322 aa).

2 C2HC/C3H-type zinc fingers span residues 9–38 (PVYP…LATL) and 119–148 (DYVQ…QTTR). Residues cysteine 13, cysteine 16, histidine 28, cysteine 32, cysteine 123, cysteine 126, histidine 138, and cysteine 142 each coordinate Zn(2+). Residues 144 to 322 (EQTTRKQGGK…SRNNSRSRIF (179 aa)) are disordered. The segment covering 148-168 (RKQGGKSSAGNRGLTSNNYRS) has biased composition (polar residues). Residues 171 to 219 (SKHEGRKQESSSRNGSAERKTTTRGRDGSLSRARRDDSNDLTNRRKSLE) show a composition bias toward basic and acidic residues. The span at 220 to 238 (TRSQLTTGQANNRTTSLSA) shows a compositional bias: polar residues. The span at 278 to 294 (TTTTASASRSGSGSSSR) shows a compositional bias: low complexity. Residues 296 to 305 (RTRDESRESR) are compositionally biased toward basic and acidic residues. Residues 311–322 (SNSRNNSRSRIF) are compositionally biased toward low complexity.

The protein belongs to the ZC2HC1 family. The cofactor is Zn(2+).

The chain is Zinc finger C2HC domain-containing protein CBG14627 from Caenorhabditis briggsae.